The primary structure comprises 198 residues: Cell division protein SepF (198 aa).

Positions 170-198 are disordered; sequence EVPQPPARPARPASTNPPAWGNETNRMAQ. Over residues 179–188 the composition is skewed to low complexity; it reads ARPASTNPPA.

Belongs to the SepF family. As to quaternary structure, homodimer. Interacts with FtsZ.

It is found in the cytoplasm. Its function is as follows. Cell division protein that is part of the divisome complex and is recruited early to the Z-ring. Probably stimulates Z-ring formation, perhaps through the cross-linking of FtsZ protofilaments. Its function overlaps with FtsA. The protein is Cell division protein SepF of Nostoc sp. (strain PCC 7120 / SAG 25.82 / UTEX 2576).